The chain runs to 646 residues: Type III restriction-modification enzyme EcoPI Mod subunit (646 aa).

Residues 123-126 are binding of S-adenosyl methionine; it reads DPPY.

The protein belongs to the N(4)/N(6)-methyltransferase family. As to quaternary structure, homodimer. A heterotetramer with stoichiometry Res(2)Mod(2).

It catalyses the reaction a 2'-deoxyadenosine in DNA + S-adenosyl-L-methionine = an N(6)-methyl-2'-deoxyadenosine in DNA + S-adenosyl-L-homocysteine + H(+). In terms of biological role, a beta subtype methylase that binds the system-specific DNA recognition site 5'-AGACC-3' and methylates A-3 (of only 1 strand as the other does not have an A residue). DNA restriction requires both the Res and Mod subunits. The chain is Type III restriction-modification enzyme EcoPI Mod subunit from Enterobacteriaceae (Bacteriophage P1).